Consider the following 358-residue polypeptide: MRKINFSAGPSTLPLEILEQAQKELCDYQGRGYSIMEISHRTKVFEEVHFGAQEKAKKLYGLNDDYEVLFLQGGASLQFAMIPMNLALNGVCEYANTGVWTKKAIKEAQILGVNVKTVASSEESNFNHIPRVEFRDNADYAYICSNNTIYGTQYQNYPKTKTPLIVDASSDFFSRKVDFSNIALFYGGVQKNAGISGLSCIFIRKDMLERSKNKQIPSMLNYLTHAENQSLFNTPPTFAIYMFNLEMDWLLNQGGLDKVHEKNSQKAAMLYECIDLSNGFYKGHADKKDRSLMNVSFNIAKNKDLEPLFVKEAEEAGMIGLKGHRILGGIRASIYNALNLDQIKTLCEFMKEFQGKYA.

Residue R41 coordinates L-glutamate. Pyridoxal 5'-phosphate-binding positions include 75–76 (AS), W100, T148, D167, and Q190. An N6-(pyridoxal phosphate)lysine modification is found at K191. 233–234 (NT) contributes to the pyridoxal 5'-phosphate binding site.

Belongs to the class-V pyridoxal-phosphate-dependent aminotransferase family. SerC subfamily. In terms of assembly, homodimer. The cofactor is pyridoxal 5'-phosphate.

The protein resides in the cytoplasm. It carries out the reaction O-phospho-L-serine + 2-oxoglutarate = 3-phosphooxypyruvate + L-glutamate. The enzyme catalyses 4-(phosphooxy)-L-threonine + 2-oxoglutarate = (R)-3-hydroxy-2-oxo-4-phosphooxybutanoate + L-glutamate. It participates in amino-acid biosynthesis; L-serine biosynthesis; L-serine from 3-phospho-D-glycerate: step 2/3. It functions in the pathway cofactor biosynthesis; pyridoxine 5'-phosphate biosynthesis; pyridoxine 5'-phosphate from D-erythrose 4-phosphate: step 3/5. In terms of biological role, catalyzes the reversible conversion of 3-phosphohydroxypyruvate to phosphoserine and of 3-hydroxy-2-oxo-4-phosphonooxybutanoate to phosphohydroxythreonine. The chain is Phosphoserine aminotransferase from Campylobacter jejuni subsp. jejuni serotype O:23/36 (strain 81-176).